Here is a 945-residue protein sequence, read N- to C-terminus: Splicing factor, suppressor of white-apricot homolog (945 aa).

Disordered regions lie at residues 1–28 (MYGA…GTGT) and 157–190 (YYDP…PFIA). Basic and acidic residues-rich tracts occupy residues 9–21 (AKAE…KEEA) and 169–178 (PSKQREKSEA). An SURP motif 1 repeat occupies 211–253 (IIERTANFVCKQGAQFEIMLKAKQARNSQFDFLRFDHYLNPYY). The tract at residues 269–298 (AESKSEEKKKSGPTSDNEEEDDEEDGSYLH) is disordered. A Phosphoserine modification is found at Ser-283. The segment covering 284 to 294 (DNEEEDDEEDG) has biased composition (acidic residues). The residue at position 315 (Lys-315) is an N6-acetyllysine. Disordered stretches follow at residues 332 to 355 (KAQA…PSQV) and 403 to 438 (SSSP…STTT). Residues 335-352 (ADSSAPAPPTADGTPAQP) show a composition bias toward low complexity. The span at 412 to 425 (VPPPPGTTPPPPPT) shows a compositional bias: pro residues. A compositionally biased stretch (low complexity) spans 426 to 438 (TAESSSGVTSTTT). An SURP motif 2 repeat occupies 458-498 (VIDKLAEYVARNGLKFETSVRAKNDQRFEFLQPWHQYNAYY). Disordered regions lie at residues 512-566 (GSTQ…TVDG), 589-680 (PLEK…QAER), and 714-921 (GVMP…VQSK). The span at 514–527 (TQAASTAEEAPTET) shows a compositional bias: low complexity. Residues 528–540 (AVEESSEAGEDGA) are compositionally biased toward acidic residues. Positions 589–598 (PLEKNRVKLD) are enriched in basic and acidic residues. 2 positions are modified to phosphoserine: Ser-601 and Ser-621. Over residues 615–630 (SSVANPSPAAAPPSAV) the composition is skewed to low complexity. Positions 632–686 (EEKKPQLTQEELEAKQAKQKLEDRLAAAAREKLAQASKESKEKQLQAERKRKAAL) form a coiled coil. Thr-639 bears the Phosphothreonine mark. 2 stretches are compositionally biased toward basic and acidic residues: residues 643–679 (LEAK…LQAE) and 733–752 (KPPE…EERE). 2 stretches are compositionally biased toward basic residues: residues 753-787 (KKKK…KAKH) and 795-810 (TVRR…RRRA). A compositionally biased stretch (basic and acidic residues) spans 811–821 (HSPERRREDRS). A phosphoserine mark is found at Ser-829 and Ser-831. The segment covering 835–861 (SRKRTRSRSPHEKKKKRRSRSRTKAKA) has biased composition (basic residues). The span at 871–894 (QAAQRPSAHSAHSASISPVESRGS) shows a compositional bias: low complexity. The span at 895 to 908 (SQERSRGVSQEKDG) shows a compositional bias: basic and acidic residues. Ser-899 and Ser-903 each carry phosphoserine. Over residues 909–920 (QISSAIVSSVQS) the composition is skewed to low complexity.

The protein resides in the nucleus. Functionally, plays a role as an alternative splicing regulator. Regulate its own expression at the level of RNA processing. Also regulates the splicing of fibronectin and CD45 genes. May act, at least in part, by interaction with other R/S-containing splicing factors. Represses the splicing of MAPT/Tau exon 10. The chain is Splicing factor, suppressor of white-apricot homolog (Sfswap) from Rattus norvegicus (Rat).